Reading from the N-terminus, the 289-residue chain is MALTEAWLIEKANRKLNAGGMYKITSDKTRNVIKKMAKEGIYLCVAQGYRSTAEQNALYAQGRTKPGAIVTNAKGGQSNHNYGVAVDLCLYTNDGKDVIWESTTSRWKKVVAAMKAEGFKWGGDWKSFKDYPHFELCDAVSGEKIPAATQNTNTNSNRYEGKVIDSAPLLPKMDFKSSPFRMYKVGTEFLVYDHNQYWYKTYIDDKLYYMYKSFCDVVAKKDAKGRIKVRIKSAKDLRIPVWNNIKLNSGKIKWYAPNVKLAWYNYRRGYLELWYPNDGWYYTAEYFLK.

The protein belongs to the peptidase M15C family.

Its subcellular location is the secreted. In terms of biological role, cell wall lytic enzyme. Hydrolyzes the link between L-alanine and D-glutamate residues in certain bacterial cell-wall glycopeptides. This is L-alanyl-D-glutamate peptidase (ply) from Listeria monocytogenes (Bacteriophage A500).